The chain runs to 151 residues: MNPSARRRARECVVQALYAWQVSQNDIAEVELSFLADQETQGADIAYFRHVLLGVASDVEALDTLMTPYLSRQFQELGQIEKAILRLAMFELNKRDDVPYKVTINEAIELGKTFGADDSHKFINGVLDKAAPIIRKRMQIRSQNGPYQSVC.

This sequence belongs to the NusB family.

Functionally, involved in transcription antitermination. Required for transcription of ribosomal RNA (rRNA) genes. Binds specifically to the boxA antiterminator sequence of the ribosomal RNA (rrn) operons. In Hamiltonella defensa subsp. Acyrthosiphon pisum (strain 5AT), this protein is Transcription antitermination protein NusB.